We begin with the raw amino-acid sequence, 211 residues long: MKIEVKTLAAKDAGAIDLDDAVFGIEEVRSDLLQRVVKWQLAARQQGTHKTLGRSEINRTKKRFGRQKGGGTARHGARSAPQFVGGGKAHGPRVRSHAHELPKKVRALGLRHALSAKLGAKSLVIIDDAALDAPQTKALRTSFEGLGISNALVISGAEVNENFAKAARNLPCIDVLPAQGLNVYDVLRRDTLVLTKAAVEQIHARLSAKEA.

The segment at 63–94 (RFGRQKGGGTARHGARSAPQFVGGGKAHGPRV) is disordered.

It belongs to the universal ribosomal protein uL4 family. In terms of assembly, part of the 50S ribosomal subunit.

One of the primary rRNA binding proteins, this protein initially binds near the 5'-end of the 23S rRNA. It is important during the early stages of 50S assembly. It makes multiple contacts with different domains of the 23S rRNA in the assembled 50S subunit and ribosome. Its function is as follows. Forms part of the polypeptide exit tunnel. The protein is Large ribosomal subunit protein uL4 of Maricaulis maris (strain MCS10) (Caulobacter maris).